The sequence spans 584 residues: A-type ATP synthase subunit A (584 aa).

ATP is bound at residue 233–240 (GPFGSGKT).

Belongs to the ATPase alpha/beta chains family. Has multiple subunits with at least A(3), B(3), C, D, E, F, H, I and proteolipid K(x).

The protein localises to the cell membrane. The enzyme catalyses ATP + H2O + 4 H(+)(in) = ADP + phosphate + 5 H(+)(out). Component of the A-type ATP synthase that produces ATP from ADP in the presence of a proton gradient across the membrane. The A chain is the catalytic subunit. This chain is A-type ATP synthase subunit A, found in Methanobrevibacter smithii (strain ATCC 35061 / DSM 861 / OCM 144 / PS).